Consider the following 601-residue polypeptide: Proline--tRNA ligase (601 aa).

Belongs to the class-II aminoacyl-tRNA synthetase family. ProS type 1 subfamily. Homodimer.

It localises to the cytoplasm. The enzyme catalyses tRNA(Pro) + L-proline + ATP = L-prolyl-tRNA(Pro) + AMP + diphosphate. Functionally, catalyzes the attachment of proline to tRNA(Pro) in a two-step reaction: proline is first activated by ATP to form Pro-AMP and then transferred to the acceptor end of tRNA(Pro). As ProRS can inadvertently accommodate and process non-cognate amino acids such as alanine and cysteine, to avoid such errors it has two additional distinct editing activities against alanine. One activity is designated as 'pretransfer' editing and involves the tRNA(Pro)-independent hydrolysis of activated Ala-AMP. The other activity is designated 'posttransfer' editing and involves deacylation of mischarged Ala-tRNA(Pro). The misacylated Cys-tRNA(Pro) is not edited by ProRS. The polypeptide is Proline--tRNA ligase (Trichodesmium erythraeum (strain IMS101)).